A 736-amino-acid polypeptide reads, in one-letter code: MAYIAVPAVVDSRSSEAIGLLESFGVDAGADANDVSYQDHDYVLDQLQYMLDGYEAGDVIDALVHKNWLHHSVYCLLPPKSQLLEYWKSNPSVIPDNVDRRLRKRLMLKKDLRKDDEYNQLARAFKISDVYAPLISSTTSPMTMIQNLNQGEIVYTTTDRVIGARILLYAPRKYYASTLSFTMTKCIIPFGKEVGRVPHSRFNVGTFPSIATPKCFVMSGVDIESIPNEFIKLFYQRVKSVHANILNDISPQIVSDMINRKRLRVHTPSDRRAAQLMHLPYHVKRGASHVDVYKVDVVDVLLEVVDVADGLRNVSRKLTMHTVPVCILEMLGIEIADYCIRQEDGMFTDWFLLLTMLSDGLTDRRTHCQYLINPSSVPPDVILNISITGFINRHTIDVMPDIYDFVKPIGAVLPKGSFKSTIMRVLDSISILGVQIMPRAHVVDSDEVGEQMEPTFEHAVMEIYKGIAGVDSLDDLIKWVLNSDLIPHDDRLGQLFQAFLPLAKDLLAPMARKFYDNSMSEGRLLTFAHADSELLNANYFGHLLRLKIPYITEVNLMIRKNREGGELFQLVLSYLYKMYATSAQPKWFGSLLRLLICPWLHMEKLIGEADPASTSAEIGWHIPREQLMQDGWCGCEDGFIPYVSIRAPRLVMEELMEKNWGQYHAQVIVTDQLVVGEPRRVSAKAVIKGNHLPVKLVSRFACFTLTAKYEMRLSCGHSTGRGAAYNARLAFRSDLA.

The protein belongs to the orthoreovirus mu-2 protein family. As to quaternary structure, interacts with protein mu-NS; in viral inclusions. Interacts with polymerase lambda-3; this interaction stimulates the ATPase activity of mu-2. It depends on a divalent metal cation as a cofactor.

The protein resides in the virion. Its subcellular location is the host cytoplasm. The protein localises to the host cytoskeleton. Functionally, minor inner capsid (core) component. Displays NTPase and RNA 5'-triphosphatase (RTPase) activities. ATP is the preferred substrate for hydrolysis. May function as a cofactor of polymerase lambda-3. Associates with microtubules and plays a role in the formation, structural organization and morphology of viral inclusions, where the assembly of cores and the replication of viral RNA occur. Together with mu-NS, recruits the other core proteins to these inclusions. This is Microtubule-associated protein mu-2 (M1) from Mammalia (T1L).